The sequence spans 40 residues: Photosystem II reaction center protein J (40 aa).

Residues 8-28 (IPLWLISTVTGTLVIGLMGIF) form a helical membrane-spanning segment.

The protein belongs to the PsbJ family. In terms of assembly, PSII is composed of 1 copy each of membrane proteins PsbA, PsbB, PsbC, PsbD, PsbE, PsbF, PsbH, PsbI, PsbJ, PsbK, PsbL, PsbM, PsbT, PsbX, PsbY, PsbZ, Psb30/Ycf12, at least 3 peripheral proteins of the oxygen-evolving complex and a large number of cofactors. It forms dimeric complexes.

The protein localises to the plastid. It localises to the chloroplast thylakoid membrane. In terms of biological role, one of the components of the core complex of photosystem II (PSII). PSII is a light-driven water:plastoquinone oxidoreductase that uses light energy to abstract electrons from H(2)O, generating O(2) and a proton gradient subsequently used for ATP formation. It consists of a core antenna complex that captures photons, and an electron transfer chain that converts photonic excitation into a charge separation. This is Photosystem II reaction center protein J from Ginkgo biloba (Ginkgo).